Reading from the N-terminus, the 159-residue chain is 2-C-methyl-D-erythritol 2,4-cyclodiphosphate synthase (159 aa).

Positions 10 and 12 each coordinate a divalent metal cation. 4-CDP-2-C-methyl-D-erythritol 2-phosphate is bound by residues 10–12 (DVH) and 36–37 (HS). His-44 lines the a divalent metal cation pocket. 4-CDP-2-C-methyl-D-erythritol 2-phosphate is bound by residues 58–60 (DIG), 63–67 (FPDTD), 102–108 (AQAPKMA), 134–137 (TTTE), Phe-141, and Arg-144.

It belongs to the IspF family. In terms of assembly, homotrimer. Requires a divalent metal cation as cofactor.

The catalysed reaction is 4-CDP-2-C-methyl-D-erythritol 2-phosphate = 2-C-methyl-D-erythritol 2,4-cyclic diphosphate + CMP. Its pathway is isoprenoid biosynthesis; isopentenyl diphosphate biosynthesis via DXP pathway; isopentenyl diphosphate from 1-deoxy-D-xylulose 5-phosphate: step 4/6. In terms of biological role, involved in the biosynthesis of isopentenyl diphosphate (IPP) and dimethylallyl diphosphate (DMAPP), two major building blocks of isoprenoid compounds. Catalyzes the conversion of 4-diphosphocytidyl-2-C-methyl-D-erythritol 2-phosphate (CDP-ME2P) to 2-C-methyl-D-erythritol 2,4-cyclodiphosphate (ME-CPP) with a corresponding release of cytidine 5-monophosphate (CMP). In Idiomarina loihiensis (strain ATCC BAA-735 / DSM 15497 / L2-TR), this protein is 2-C-methyl-D-erythritol 2,4-cyclodiphosphate synthase.